A 357-amino-acid chain; its full sequence is Phosphoserine aminotransferase (357 aa).

Arg41 contributes to the L-glutamate binding site. Pyridoxal 5'-phosphate is bound by residues 76–77 (GT), Trp102, Thr152, Asp171, and Gln194. Residue Lys195 is modified to N6-(pyridoxal phosphate)lysine. Residue 235–236 (NT) participates in pyridoxal 5'-phosphate binding.

It belongs to the class-V pyridoxal-phosphate-dependent aminotransferase family. SerC subfamily. Homodimer. Pyridoxal 5'-phosphate serves as cofactor.

The protein localises to the cytoplasm. The catalysed reaction is O-phospho-L-serine + 2-oxoglutarate = 3-phosphooxypyruvate + L-glutamate. It carries out the reaction 4-(phosphooxy)-L-threonine + 2-oxoglutarate = (R)-3-hydroxy-2-oxo-4-phosphooxybutanoate + L-glutamate. The protein operates within amino-acid biosynthesis; L-serine biosynthesis; L-serine from 3-phospho-D-glycerate: step 2/3. Catalyzes the reversible conversion of 3-phosphohydroxypyruvate to phosphoserine and of 3-hydroxy-2-oxo-4-phosphonooxybutanoate to phosphohydroxythreonine. This is Phosphoserine aminotransferase from Limosilactobacillus fermentum (strain NBRC 3956 / LMG 18251) (Lactobacillus fermentum).